The following is a 179-amino-acid chain: Large ribosomal subunit protein uL16 (179 aa).

A disordered region spans residues 147–179; sequence KASSASLANLDEDANSQTDDETSSSGSVATVES. Residues 156 to 168 are compositionally biased toward acidic residues; it reads LDEDANSQTDDET. Residues 169–179 show a composition bias toward polar residues; that stretch reads SSSGSVATVES.

Belongs to the universal ribosomal protein uL16 family. In terms of assembly, part of the 50S ribosomal subunit.

Its function is as follows. Binds 23S rRNA and is also seen to make contacts with the A and possibly P site tRNAs. The protein is Large ribosomal subunit protein uL16 of Prochlorococcus marinus (strain MIT 9211).